A 653-amino-acid polypeptide reads, in one-letter code: Chaperone protein DnaK (653 aa).

Thr-198 is subject to Phosphothreonine; by autocatalysis. Residues 608–617 (DPEAAAHAAG) show a composition bias toward low complexity. The disordered stretch occupies residues 608–653 (DPEAAAHAAGMHGGAATGGGDGANKHGKGAEDVVEAEFEEVNDDKK). The span at 618 to 629 (MHGGAATGGGDG) shows a compositional bias: gly residues. Residues 639–653 (DVVEAEFEEVNDDKK) are compositionally biased toward acidic residues.

This sequence belongs to the heat shock protein 70 family.

Acts as a chaperone. The chain is Chaperone protein DnaK from Magnetococcus marinus (strain ATCC BAA-1437 / JCM 17883 / MC-1).